A 309-amino-acid polypeptide reads, in one-letter code: Glutaminase (309 aa).

Substrate is bound by residues S65, N117, E162, N169, Y193, Y245, and V263.

The protein belongs to the glutaminase family. Homotetramer.

It catalyses the reaction L-glutamine + H2O = L-glutamate + NH4(+). The protein is Glutaminase of Bacillus cytotoxicus (strain DSM 22905 / CIP 110041 / 391-98 / NVH 391-98).